A 734-amino-acid polypeptide reads, in one-letter code: Photosystem I P700 chlorophyll a apoprotein A2 (734 aa).

Transmembrane regions (helical) follow at residues 46 to 69 (IFAS…FHVA), 135 to 158 (LYTG…LHLQ), 175 to 199 (LNHH…HVAI), 273 to 291 (IAHH…GHMY), 330 to 353 (LHFQ…QHMY), 369 to 395 (AALY…IFFI), 417 to 439 (AIIS…LYVH), and 517 to 535 (FLVH…LILV). Residues Cys-559 and Cys-568 each contribute to the [4Fe-4S] cluster site. 2 consecutive transmembrane segments (helical) span residues 575–596 (AFYL…YWHW) and 643–665 (LSVW…MFLI). Chlorophyll a contacts are provided by His-654, Met-662, and Tyr-670. Trp-671 provides a ligand contact to phylloquinone. The helical transmembrane segment at 707-727 (LVGLAHFSVGYIFTYAAFLIA) threads the bilayer.

It belongs to the PsaA/PsaB family. As to quaternary structure, the PsaA/B heterodimer binds the P700 chlorophyll special pair and subsequent electron acceptors. PSI consists of a core antenna complex that captures photons, and an electron transfer chain that converts photonic excitation into a charge separation. The eukaryotic PSI reaction center is composed of at least 11 subunits. P700 is a chlorophyll a/chlorophyll a' dimer, A0 is one or more chlorophyll a, A1 is one or both phylloquinones and FX is a shared 4Fe-4S iron-sulfur center. is required as a cofactor.

The protein resides in the plastid. The protein localises to the chloroplast thylakoid membrane. The enzyme catalyses reduced [plastocyanin] + hnu + oxidized [2Fe-2S]-[ferredoxin] = oxidized [plastocyanin] + reduced [2Fe-2S]-[ferredoxin]. Its function is as follows. PsaA and PsaB bind P700, the primary electron donor of photosystem I (PSI), as well as the electron acceptors A0, A1 and FX. PSI is a plastocyanin-ferredoxin oxidoreductase, converting photonic excitation into a charge separation, which transfers an electron from the donor P700 chlorophyll pair to the spectroscopically characterized acceptors A0, A1, FX, FA and FB in turn. Oxidized P700 is reduced on the lumenal side of the thylakoid membrane by plastocyanin. This Coffea arabica (Arabian coffee) protein is Photosystem I P700 chlorophyll a apoprotein A2.